A 178-amino-acid polypeptide reads, in one-letter code: uncharacterized protein (178 aa).

It belongs to the mycobacterial PPE family.

This is an uncharacterized protein from Mycobacterium tuberculosis (strain CDC 1551 / Oshkosh).